We begin with the raw amino-acid sequence, 218 residues long: Glutathione S-transferase Mu 1 (218 aa).

The region spanning 2-88 (PMTLGYWDIR…YIARKHNLCG (87 aa)) is the GST N-terminal domain. Glutathione is bound at residue 7-8 (YW). At threonine 34 the chain carries Phosphothreonine. Glutathione contacts are provided by residues 43–46 (RSQW), lysine 50, 59–60 (NL), and 72–73 (QS). Residues 90–208 (TEEEKIRVDI…KSSRFLPKPL (119 aa)) form the GST C-terminal domain. Tyrosine 116 contacts substrate.

This sequence belongs to the GST superfamily. Mu family. Homodimer.

Its subcellular location is the cytoplasm. It catalyses the reaction RX + glutathione = an S-substituted glutathione + a halide anion + H(+). The catalysed reaction is prostaglandin A2 + glutathione = prostaglandin A2-S-(R)-glutathione. The enzyme catalyses prostaglandin J2 + glutathione = prostaglandin J2-S-(R)-glutathione. It carries out the reaction prostaglandin J2 + glutathione = prostaglandin J2-S-(S)-glutathione. It catalyses the reaction prostaglandin A2 + glutathione = prostaglandin A2-S-(S)-glutathione. The catalysed reaction is 11(S)-hydroxy-14(S),15(S)-epoxy-(5Z,8Z,12E)-eicosatrienoate + glutathione = (11S,15S)-dihydroxy-14(R)-S-glutathionyl-(5Z,8Z,12E)-eicosatrienoate. Its function is as follows. Conjugation of reduced glutathione to a wide number of exogenous and endogenous hydrophobic electrophiles. Involved in the formation of glutathione conjugates of both prostaglandin A2 (PGA2) and prostaglandin J2 (PGJ2). Participates in the formation of novel hepoxilin regioisomers. The protein is Glutathione S-transferase Mu 1 (GSTM1) of Macaca fascicularis (Crab-eating macaque).